We begin with the raw amino-acid sequence, 247 residues long: CDP-diacylglycerol pyrophosphatase (247 aa).

A helical transmembrane segment spans residues 5–22; it reads IVLALVVSVAVAGGWLWM.

It belongs to the Cdh family.

It localises to the cell inner membrane. The enzyme catalyses a CDP-1,2-diacyl-sn-glycerol + H2O = a 1,2-diacyl-sn-glycero-3-phosphate + CMP + 2 H(+). The protein operates within phospholipid metabolism; CDP-diacylglycerol degradation; phosphatidate from CDP-diacylglycerol: step 1/1. In Enterobacter sp. (strain 638), this protein is CDP-diacylglycerol pyrophosphatase.